The sequence spans 505 residues: Deoxyguanosinetriphosphate triphosphohydrolase (505 aa).

The 208-residue stretch at 66-273 folds into the HD domain; that stretch reads RLTHSMEVQQ…MEAADDISYC (208 aa).

It belongs to the dGTPase family. Type 1 subfamily. As to quaternary structure, homotetramer. Requires Mg(2+) as cofactor.

It catalyses the reaction dGTP + H2O = 2'-deoxyguanosine + triphosphate + H(+). With respect to regulation, inhibited by the action of reducing agents such as dithiothreitol and 2-mercaptoethanol. In terms of biological role, dGTPase preferentially hydrolyzes dGTP over the other canonical NTPs. In Shigella boydii, this protein is Deoxyguanosinetriphosphate triphosphohydrolase.